The chain runs to 702 residues: Elongation factor G (702 aa).

The tr-type G domain maps to 8-290 (TRYRNIGISA…AVIEYLPAPT (283 aa)). Residues 17 to 24 (AHIDAGKT), 88 to 92 (DTPGH), and 142 to 145 (NKMD) contribute to the GTP site.

This sequence belongs to the TRAFAC class translation factor GTPase superfamily. Classic translation factor GTPase family. EF-G/EF-2 subfamily.

Its subcellular location is the cytoplasm. Functionally, catalyzes the GTP-dependent ribosomal translocation step during translation elongation. During this step, the ribosome changes from the pre-translocational (PRE) to the post-translocational (POST) state as the newly formed A-site-bound peptidyl-tRNA and P-site-bound deacylated tRNA move to the P and E sites, respectively. Catalyzes the coordinated movement of the two tRNA molecules, the mRNA and conformational changes in the ribosome. The protein is Elongation factor G of Erwinia tasmaniensis (strain DSM 17950 / CFBP 7177 / CIP 109463 / NCPPB 4357 / Et1/99).